Consider the following 228-residue polypeptide: Sec-independent protein translocase protein TatB (228 aa).

Residues 1-21 (MFDFGLGELVFVGIIALIVLG) form a helical membrane-spanning segment. Disordered regions lie at residues 109 to 162 (DFGV…AETD) and 197 to 228 (PHTT…VRKS). Basic residues predominate over residues 206 to 228 (AISRKRDFRPKHRAKPKLRVRKS).

The protein belongs to the TatB family. As to quaternary structure, the Tat system comprises two distinct complexes: a TatABC complex, containing multiple copies of TatA, TatB and TatC subunits, and a separate TatA complex, containing only TatA subunits. Substrates initially bind to the TatABC complex, which probably triggers association of the separate TatA complex to form the active translocon.

The protein localises to the cell inner membrane. In terms of biological role, part of the twin-arginine translocation (Tat) system that transports large folded proteins containing a characteristic twin-arginine motif in their signal peptide across membranes. Together with TatC, TatB is part of a receptor directly interacting with Tat signal peptides. TatB may form an oligomeric binding site that transiently accommodates folded Tat precursor proteins before their translocation. This chain is Sec-independent protein translocase protein TatB, found in Neisseria meningitidis serogroup B (strain ATCC BAA-335 / MC58).